The sequence spans 598 residues: uncharacterized protein (598 aa).

A compositionally biased stretch (basic and acidic residues) spans 1–23 (MSHEGSRQARDRGVTRSKAEKAR). Disordered stretches follow at residues 1–32 (MSHE…VPQV), 151–190 (FHNE…VTPR), and 222–241 (PSKE…SPQS). The span at 225–235 (ESLRSTAEGER) shows a compositional bias: basic and acidic residues. Phosphoserine occurs at positions 238 and 242. 2 disordered regions span residues 366 to 396 (RRSQ…SSPR) and 551 to 571 (AEEG…VSKP). 2 stretches are compositionally biased toward polar residues: residues 369-386 (QAGT…SSRA) and 558-569 (APEQQPIQTGVS).

This is an uncharacterized protein from Mus musculus (Mouse).